We begin with the raw amino-acid sequence, 192 residues long: UPF0301 protein Bcep1808_0798 (192 aa).

This sequence belongs to the UPF0301 (AlgH) family.

The protein is UPF0301 protein Bcep1808_0798 of Burkholderia vietnamiensis (strain G4 / LMG 22486) (Burkholderia cepacia (strain R1808)).